Here is a 297-residue protein sequence, read N- to C-terminus: Ribosomal RNA small subunit methyltransferase H (297 aa).

S-adenosyl-L-methionine contacts are provided by residues 34–36 (GGH), Asp-54, Phe-81, Asp-99, and Gln-106.

The protein belongs to the methyltransferase superfamily. RsmH family.

Its subcellular location is the cytoplasm. It carries out the reaction cytidine(1402) in 16S rRNA + S-adenosyl-L-methionine = N(4)-methylcytidine(1402) in 16S rRNA + S-adenosyl-L-homocysteine + H(+). Functionally, specifically methylates the N4 position of cytidine in position 1402 (C1402) of 16S rRNA. The protein is Ribosomal RNA small subunit methyltransferase H of Chlamydia pneumoniae (Chlamydophila pneumoniae).